The following is a 491-amino-acid chain: Anthranilate synthase component 1 (491 aa).

Residues S49 and 271-273 (PYL) each bind L-tryptophan. 306–307 (GT) provides a ligand contact to chorismate. A Mg(2+)-binding site is contributed by E333. Residues Y421, R441, 455 to 457 (GAG), and G457 each bind chorismate. Mg(2+) is bound at residue E470.

This sequence belongs to the anthranilate synthase component I family. As to quaternary structure, heterotetramer consisting of two non-identical subunits: a beta subunit (TrpG) and a large alpha subunit (TrpE). The cofactor is Mg(2+).

It carries out the reaction chorismate + L-glutamine = anthranilate + pyruvate + L-glutamate + H(+). The protein operates within amino-acid biosynthesis; L-tryptophan biosynthesis; L-tryptophan from chorismate: step 1/5. With respect to regulation, feedback inhibited by tryptophan. In terms of biological role, part of a heterotetrameric complex that catalyzes the two-step biosynthesis of anthranilate, an intermediate in the biosynthesis of L-tryptophan. In the first step, the glutamine-binding beta subunit (TrpG) of anthranilate synthase (AS) provides the glutamine amidotransferase activity which generates ammonia as a substrate that, along with chorismate, is used in the second step, catalyzed by the large alpha subunit of AS (TrpE) to produce anthranilate. In the absence of TrpG, TrpE can synthesize anthranilate directly from chorismate and high concentrations of ammonia. In Neisseria gonorrhoeae (strain ATCC 700825 / FA 1090), this protein is Anthranilate synthase component 1 (trpE).